We begin with the raw amino-acid sequence, 277 residues long: 3-methyl-2-oxobutanoate hydroxymethyltransferase (277 aa).

Positions 43 and 82 each coordinate Mg(2+). Residues 43-44 (DS), Asp-82, and Lys-112 contribute to the 3-methyl-2-oxobutanoate site. Position 114 (Glu-114) interacts with Mg(2+). Catalysis depends on Glu-181, which acts as the Proton acceptor.

This sequence belongs to the PanB family. Homodecamer; pentamer of dimers. Mg(2+) is required as a cofactor.

The protein localises to the cytoplasm. It carries out the reaction 3-methyl-2-oxobutanoate + (6R)-5,10-methylene-5,6,7,8-tetrahydrofolate + H2O = 2-dehydropantoate + (6S)-5,6,7,8-tetrahydrofolate. It functions in the pathway cofactor biosynthesis; (R)-pantothenate biosynthesis; (R)-pantoate from 3-methyl-2-oxobutanoate: step 1/2. Catalyzes the reversible reaction in which hydroxymethyl group from 5,10-methylenetetrahydrofolate is transferred onto alpha-ketoisovalerate to form ketopantoate. This chain is 3-methyl-2-oxobutanoate hydroxymethyltransferase, found in Bacillus subtilis (strain 168).